Here is a 107-residue protein sequence, read N- to C-terminus: Large ribosomal subunit protein uL24 (107 aa).

Belongs to the universal ribosomal protein uL24 family. Part of the 50S ribosomal subunit.

One of two assembly initiator proteins, it binds directly to the 5'-end of the 23S rRNA, where it nucleates assembly of the 50S subunit. Functionally, one of the proteins that surrounds the polypeptide exit tunnel on the outside of the subunit. In Gluconacetobacter diazotrophicus (strain ATCC 49037 / DSM 5601 / CCUG 37298 / CIP 103539 / LMG 7603 / PAl5), this protein is Large ribosomal subunit protein uL24.